The chain runs to 176 residues: Ribosome maturation factor RimM (176 aa).

The region spanning 97–176 is the PRC barrel domain; sequence GDEFYWRELV…TIQVDWDPSF (80 aa).

The protein belongs to the RimM family. Binds ribosomal protein uS19.

The protein localises to the cytoplasm. Functionally, an accessory protein needed during the final step in the assembly of 30S ribosomal subunit, possibly for assembly of the head region. Essential for efficient processing of 16S rRNA. May be needed both before and after RbfA during the maturation of 16S rRNA. It has affinity for free ribosomal 30S subunits but not for 70S ribosomes. The protein is Ribosome maturation factor RimM of Pseudoalteromonas atlantica (strain T6c / ATCC BAA-1087).